The sequence spans 177 residues: Large ribosomal subunit protein uL6 (177 aa).

Belongs to the universal ribosomal protein uL6 family. As to quaternary structure, part of the 50S ribosomal subunit.

In terms of biological role, this protein binds to the 23S rRNA, and is important in its secondary structure. It is located near the subunit interface in the base of the L7/L12 stalk, and near the tRNA binding site of the peptidyltransferase center. The sequence is that of Large ribosomal subunit protein uL6 from Parvibaculum lavamentivorans (strain DS-1 / DSM 13023 / NCIMB 13966).